The sequence spans 252 residues: Imidazole glycerol phosphate synthase subunit HisF (252 aa).

Residues Asp-11 and Asp-130 contribute to the active site.

Belongs to the HisA/HisF family. In terms of assembly, heterodimer of HisH and HisF.

Its subcellular location is the cytoplasm. It catalyses the reaction 5-[(5-phospho-1-deoxy-D-ribulos-1-ylimino)methylamino]-1-(5-phospho-beta-D-ribosyl)imidazole-4-carboxamide + L-glutamine = D-erythro-1-(imidazol-4-yl)glycerol 3-phosphate + 5-amino-1-(5-phospho-beta-D-ribosyl)imidazole-4-carboxamide + L-glutamate + H(+). It functions in the pathway amino-acid biosynthesis; L-histidine biosynthesis; L-histidine from 5-phospho-alpha-D-ribose 1-diphosphate: step 5/9. Functionally, IGPS catalyzes the conversion of PRFAR and glutamine to IGP, AICAR and glutamate. The HisF subunit catalyzes the cyclization activity that produces IGP and AICAR from PRFAR using the ammonia provided by the HisH subunit. The polypeptide is Imidazole glycerol phosphate synthase subunit HisF (Lactiplantibacillus plantarum (strain ATCC BAA-793 / NCIMB 8826 / WCFS1) (Lactobacillus plantarum)).